Here is a 250-residue protein sequence, read N- to C-terminus: Cellulose biosynthesis protein BcsQ (250 aa).

Residue 9 to 16 coordinates ATP; it reads VRGGVGTT.

Belongs to the BcsQ family.

It localises to the cytoplasm. Essential for cellulose biosynthesis, shown for strain 1094, a commensal, natural cellulose producer. Also shown in strain W3110 which has a restored reading frame (TAG stop codon to TTG for amino acid 6, called strain AR3110), this protein. May play a role in subcellular localization of an active cellulose biosynthesis apparatus at the bacterial cell pole. The combination of cellulose and the curli fiber network confer cohesion, elasticity and tissue-like properties to colonies. The polypeptide is Cellulose biosynthesis protein BcsQ (Escherichia coli (strain K12)).